We begin with the raw amino-acid sequence, 68 residues long: Putative transcript Y 10 protein (68 aa).

The polypeptide is Putative transcript Y 10 protein (TTTY10) (Homo sapiens (Human)).